The following is a 294-amino-acid chain: Lipoyl synthase (294 aa).

C35, C40, C46, C61, C65, C68, and S273 together coordinate [4Fe-4S] cluster. Positions F47–E262 constitute a Radical SAM core domain.

It belongs to the radical SAM superfamily. Lipoyl synthase family. [4Fe-4S] cluster is required as a cofactor.

It localises to the cytoplasm. The enzyme catalyses [[Fe-S] cluster scaffold protein carrying a second [4Fe-4S](2+) cluster] + N(6)-octanoyl-L-lysyl-[protein] + 2 oxidized [2Fe-2S]-[ferredoxin] + 2 S-adenosyl-L-methionine + 4 H(+) = [[Fe-S] cluster scaffold protein] + N(6)-[(R)-dihydrolipoyl]-L-lysyl-[protein] + 4 Fe(3+) + 2 hydrogen sulfide + 2 5'-deoxyadenosine + 2 L-methionine + 2 reduced [2Fe-2S]-[ferredoxin]. It functions in the pathway protein modification; protein lipoylation via endogenous pathway; protein N(6)-(lipoyl)lysine from octanoyl-[acyl-carrier-protein]: step 2/2. Functionally, catalyzes the radical-mediated insertion of two sulfur atoms into the C-6 and C-8 positions of the octanoyl moiety bound to the lipoyl domains of lipoate-dependent enzymes, thereby converting the octanoylated domains into lipoylated derivatives. In Geotalea daltonii (strain DSM 22248 / JCM 15807 / FRC-32) (Geobacter daltonii), this protein is Lipoyl synthase.